Consider the following 431-residue polypeptide: Reticulon-like protein B17 (431 aa).

Disordered stretches follow at residues M1 to V110 and P126 to D152. Positions T12–N26 are enriched in polar residues. Residues P126 to K138 show a composition bias toward basic residues. The segment covering S142–D152 has biased composition (polar residues). The region spanning I168–I355 is the Reticulon domain. A run of 4 helical transmembrane segments spans residues V177–A197, F202–S222, Y286–I306, and F349–F369. The segment covering E382–Q415 has biased composition (acidic residues). The disordered stretch occupies residues E382–R422.

It localises to the endoplasmic reticulum membrane. The polypeptide is Reticulon-like protein B17 (RTNLB17) (Arabidopsis thaliana (Mouse-ear cress)).